A 358-amino-acid polypeptide reads, in one-letter code: Protein PXR1 (358 aa).

Disordered stretches follow at residues 1 to 26 and 146 to 342; these read MGLAAPKNRSKISNDPQNTTWANNTS and EVKT…KSAT. Residues 11 to 26 are compositionally biased toward polar residues; the sequence is KISNDPQNTTWANNTS. The G-patch domain maps to 25-79; it reads TSRFGHRILTSQGWQPGDSLGASDAAHAAHYTVASQSHIRVLLKDDNLGLGAKRG. 2 stretches are compositionally biased toward basic and acidic residues: residues 146–171 and 199–217; these read EVKTETQAKVEVKSEPESDGAKEDDR and SMDLRDQAKKDIAAESSKD. The span at 218–227 shows a compositional bias: basic residues; it reads KKGKKSKKDK. Over residues 287-299 the composition is skewed to acidic residues; sequence DVEDLSSESEDES. Polar residues predominate over residues 300 to 315; that stretch reads TPSASRPATGTSTPTV. Residues 328–339 are compositionally biased toward basic residues; sequence HSVRQKWIRSKK.

The protein belongs to the PINX1 family.

It is found in the nucleus. It localises to the nucleolus. Its function is as follows. Involved in rRNA-processing at A0, A1 and A2 sites and negatively regulates telomerase. This is Protein PXR1 (PXR1) from Phaeosphaeria nodorum (strain SN15 / ATCC MYA-4574 / FGSC 10173) (Glume blotch fungus).